The following is a 402-amino-acid chain: Dual-specificity RNA methyltransferase RlmN (402 aa).

Catalysis depends on glutamate 124, which acts as the Proton acceptor. Positions 130–370 constitute a Radical SAM core domain; the sequence is DADRGTLCVS…APVRTPRGRD (241 aa). Cysteine 137 and cysteine 375 are joined by a disulfide. 3 residues coordinate [4Fe-4S] cluster: cysteine 144, cysteine 148, and cysteine 151. Residues 199–200, serine 231, 253–255, and asparagine 332 contribute to the S-adenosyl-L-methionine site; these read GE and SLH. Catalysis depends on cysteine 375, which acts as the S-methylcysteine intermediate.

Belongs to the radical SAM superfamily. RlmN family. [4Fe-4S] cluster serves as cofactor.

The protein localises to the cytoplasm. The catalysed reaction is adenosine(2503) in 23S rRNA + 2 reduced [2Fe-2S]-[ferredoxin] + 2 S-adenosyl-L-methionine = 2-methyladenosine(2503) in 23S rRNA + 5'-deoxyadenosine + L-methionine + 2 oxidized [2Fe-2S]-[ferredoxin] + S-adenosyl-L-homocysteine. The enzyme catalyses adenosine(37) in tRNA + 2 reduced [2Fe-2S]-[ferredoxin] + 2 S-adenosyl-L-methionine = 2-methyladenosine(37) in tRNA + 5'-deoxyadenosine + L-methionine + 2 oxidized [2Fe-2S]-[ferredoxin] + S-adenosyl-L-homocysteine. Specifically methylates position 2 of adenine 2503 in 23S rRNA and position 2 of adenine 37 in tRNAs. m2A2503 modification seems to play a crucial role in the proofreading step occurring at the peptidyl transferase center and thus would serve to optimize ribosomal fidelity. This Rhizorhabdus wittichii (strain DSM 6014 / CCUG 31198 / JCM 15750 / NBRC 105917 / EY 4224 / RW1) (Sphingomonas wittichii) protein is Dual-specificity RNA methyltransferase RlmN.